Here is a 753-residue protein sequence, read N- to C-terminus: 5-methyltetrahydropteroyltriglutamate--homocysteine methyltransferase (753 aa).

5-methyltetrahydropteroyltri-L-glutamate is bound by residues R17–K20 and K117. Residues I431–S433 and E484 each bind L-homocysteine. L-methionine is bound by residues I431–S433 and E484. 5-methyltetrahydropteroyltri-L-glutamate is bound by residues R515–C516 and W561. D599 serves as a coordination point for L-homocysteine. Position 599 (D599) interacts with L-methionine. Position 605 (E605) interacts with 5-methyltetrahydropteroyltri-L-glutamate. Zn(2+)-binding residues include H641, C643, and E665. Residue H694 is the Proton donor of the active site. C726 lines the Zn(2+) pocket.

This sequence belongs to the vitamin-B12 independent methionine synthase family. Monomer. The cofactor is Zn(2+).

It catalyses the reaction 5-methyltetrahydropteroyltri-L-glutamate + L-homocysteine = tetrahydropteroyltri-L-glutamate + L-methionine. Its pathway is amino-acid biosynthesis; L-methionine biosynthesis via de novo pathway; L-methionine from L-homocysteine (MetE route): step 1/1. In terms of biological role, catalyzes the transfer of a methyl group from 5-methyltetrahydrofolate to homocysteine resulting in methionine formation. This is 5-methyltetrahydropteroyltriglutamate--homocysteine methyltransferase from Escherichia coli (strain K12).